Reading from the N-terminus, the 484-residue chain is tRNA sulfurtransferase (484 aa).

Residues 63 to 167 (QGIRDRLSCM…DQRLFVVHDQ (105 aa)) form the THUMP domain. ATP contacts are provided by residues 185-186 (LM), Lys-267, Gly-289, and Gln-298. Cysteines 346 and 457 form a disulfide. One can recognise a Rhodanese domain in the interval 405–483 (ALAGQVIIDI…GHANVRVYRP (79 aa)). Cys-457 (cysteine persulfide intermediate) is an active-site residue.

This sequence belongs to the ThiI family.

The protein resides in the cytoplasm. It carries out the reaction [ThiI sulfur-carrier protein]-S-sulfanyl-L-cysteine + a uridine in tRNA + 2 reduced [2Fe-2S]-[ferredoxin] + ATP + H(+) = [ThiI sulfur-carrier protein]-L-cysteine + a 4-thiouridine in tRNA + 2 oxidized [2Fe-2S]-[ferredoxin] + AMP + diphosphate. The catalysed reaction is [ThiS sulfur-carrier protein]-C-terminal Gly-Gly-AMP + S-sulfanyl-L-cysteinyl-[cysteine desulfurase] + AH2 = [ThiS sulfur-carrier protein]-C-terminal-Gly-aminoethanethioate + L-cysteinyl-[cysteine desulfurase] + A + AMP + 2 H(+). Its pathway is cofactor biosynthesis; thiamine diphosphate biosynthesis. In terms of biological role, catalyzes the ATP-dependent transfer of a sulfur to tRNA to produce 4-thiouridine in position 8 of tRNAs, which functions as a near-UV photosensor. Also catalyzes the transfer of sulfur to the sulfur carrier protein ThiS, forming ThiS-thiocarboxylate. This is a step in the synthesis of thiazole, in the thiamine biosynthesis pathway. The sulfur is donated as persulfide by IscS. This chain is tRNA sulfurtransferase, found in Pseudomonas syringae pv. tomato (strain ATCC BAA-871 / DC3000).